A 193-amino-acid polypeptide reads, in one-letter code: Thymidylate kinase (193 aa).

7–14 is an ATP binding site; it reads GIDGCGKS.

It belongs to the thymidylate kinase family.

It carries out the reaction dTMP + ATP = dTDP + ADP. Functionally, phosphorylation of dTMP to form dTDP in both de novo and salvage pathways of dTTP synthesis. The protein is Thymidylate kinase of Coprothermobacter proteolyticus (strain ATCC 35245 / DSM 5265 / OCM 4 / BT).